Reading from the N-terminus, the 335-residue chain is Beta-ketoacyl-[acyl-carrier-protein] synthase III (335 aa).

Active-site residues include cysteine 118 and histidine 259. The segment at 260–264 is ACP-binding; the sequence is QANER. The active site involves asparagine 289.

It belongs to the thiolase-like superfamily. FabH family. In terms of assembly, homodimer.

It localises to the cytoplasm. The catalysed reaction is malonyl-[ACP] + acetyl-CoA + H(+) = 3-oxobutanoyl-[ACP] + CO2 + CoA. Its pathway is lipid metabolism; fatty acid biosynthesis. In terms of biological role, catalyzes the condensation reaction of fatty acid synthesis by the addition to an acyl acceptor of two carbons from malonyl-ACP. Catalyzes the first condensation reaction which initiates fatty acid synthesis and may therefore play a role in governing the total rate of fatty acid production. Possesses both acetoacetyl-ACP synthase and acetyl transacylase activities. Its substrate specificity determines the biosynthesis of branched-chain and/or straight-chain of fatty acids. This Chlamydia caviae (strain ATCC VR-813 / DSM 19441 / 03DC25 / GPIC) (Chlamydophila caviae) protein is Beta-ketoacyl-[acyl-carrier-protein] synthase III.